The sequence spans 173 residues: Acireductone dioxygenase 1 (173 aa).

4 residues coordinate Fe(2+): H96, H98, E102, and H140. Positions 96, 98, 102, and 140 each coordinate Ni(2+).

It belongs to the acireductone dioxygenase (ARD) family. As to quaternary structure, monomer. Requires Fe(2+) as cofactor. It depends on Ni(2+) as a cofactor.

It catalyses the reaction 1,2-dihydroxy-5-(methylsulfanyl)pent-1-en-3-one + O2 = 3-(methylsulfanyl)propanoate + CO + formate + 2 H(+). The catalysed reaction is 1,2-dihydroxy-5-(methylsulfanyl)pent-1-en-3-one + O2 = 4-methylsulfanyl-2-oxobutanoate + formate + 2 H(+). It participates in amino-acid biosynthesis; L-methionine biosynthesis via salvage pathway; L-methionine from S-methyl-5-thio-alpha-D-ribose 1-phosphate: step 5/6. Functionally, catalyzes 2 different reactions between oxygen and the acireductone 1,2-dihydroxy-3-keto-5-methylthiopentene (DHK-MTPene) depending upon the metal bound in the active site. Fe-containing acireductone dioxygenase (Fe-ARD) produces formate and 2-keto-4-methylthiobutyrate (KMTB), the alpha-ketoacid precursor of methionine in the methionine recycle pathway. Ni-containing acireductone dioxygenase (Ni-ARD) produces methylthiopropionate, carbon monoxide and formate, and does not lie on the methionine recycle pathway. The sequence is that of Acireductone dioxygenase 1 from Pectobacterium atrosepticum (strain SCRI 1043 / ATCC BAA-672) (Erwinia carotovora subsp. atroseptica).